The following is a 192-amino-acid chain: Ferritin-like protein (192 aa).

Residues His44, Glu48, and His102 each contribute to the Fe(3+) site. The segment at 143–179 (RFDHDYADPHAHHDEHRDHLADMPSAGSSHEEVQPVA) is linker. Basic and acidic residues predominate over residues 149–163 (ADPHAHHDEHRDHLA). A disordered region spans residues 149-192 (ADPHAHHDEHRDHLADMPSAGSSHEEVQPVAHKKKGFTVGSLIQ). The segment at 180 to 192 (HKKKGFTVGSLIQ) is targeting peptide.

In terms of assembly, homodimer, with 2 Fe atoms bound at the subunit interface (without encapsulin), probably also a dimer when encapsulated. 42 electron-dense accretions can be seen inside the nanocompartment which are probably this cargo protein, although perhaps up to one cargo dimer can be bound per shell protein.

Its subcellular location is the encapsulin nanocompartment. It carries out the reaction 4 Fe(2+) + O2 + 4 H(+) = 4 Fe(3+) + 2 H2O. In terms of biological role, cargo protein of a type 1 encapsulin nanocompartment. A ferritin-like iron-binding protein probably involved in iron mineralization in the encapsulin nanocompartment. Has ferroxidase activity even when encapsulated, the rate is probably controlled by the rate of Fe flux across the nanocompartment pores. Part of the iron-mineralizing encapsulin-associated Firmicute (IMEF) system. 2 different cargo proteins have been identified (IMEF and Fer); when both are expressed in E.coli with the shell protein only IMEF is detected within the nanocompartment. E.coli expressing all 3 genes stores the largest amount of iron and is protected from Fe/H2O2-induced oxidative stress. The chain is Ferritin-like protein from Bacillus thermotolerans (Quasibacillus thermotolerans).